We begin with the raw amino-acid sequence, 558 residues long: MARVEL domain-containing protein 2 (558 aa).

Residues 1 to 16 (MSNDGRSRNRDRRYDE) show a composition bias toward basic and acidic residues. Disordered regions lie at residues 1–58 (MSND…PPFG) and 115–145 (CSPPASPARPNHRSPLNSCKDPYGGSEGTFS). Over 1–194 (MSNDGRSRNR…YMKSWAGLLR (194 aa)) the chain is Cytoplasmic. A compositionally biased stretch (pro residues) spans 45–58 (PLPPPPLPLQPPFG). A phosphoserine mark is found at serine 116, serine 120, and serine 161. Position 166 is a phosphothreonine (threonine 166). An MARVEL domain is found at 188 to 367 (SWAGLLRILG…SALVCLKLWR (180 aa)). A helical membrane pass occupies residues 195-215 (ILGVVELLLGAGVFACVTAYI). The Extracellular portion of the chain corresponds to 216–223 (HKDSEWYN). The helical transmembrane segment at 224 to 244 (LFGYSQPYGMGGVGGLGSMYG) threads the bilayer. The Cytoplasmic portion of the chain corresponds to 245 to 254 (GYYYTGPKTP). The helical transmembrane segment at 255–275 (FVLVVAGLAWITTIIILVLGM) threads the bilayer. Over 276–291 (SMYYRTILLDSNWWPL) the chain is Extracellular. Residues 292–312 (TEFGINVALFILYMAAAIVYV) traverse the membrane as a helical segment. At 313 to 319 (NDTNRGG) the chain is on the cytoplasmic side. Residues 320–337 (LCYYPLFNTPVNAVFCRV) form a helical membrane-spanning segment. At 338 to 341 (EGGQ) the chain is on the extracellular side. The helical transmembrane segment at 342–362 (IAAMIFLFVTMIVYLISALVC) threads the bilayer. Topologically, residues 363–558 (LKLWRHEAAR…VMNWDVQGYS (196 aa)) are cytoplasmic. Residue serine 387 is modified to Phosphoserine. Lysine 412 is covalently cross-linked (Glycyl lysine isopeptide (Lys-Gly) (interchain with G-Cter in ubiquitin)). The stretch at 439 to 548 (MPDYVAKYPV…IKQRIQEYDK (110 aa)) forms a coiled coil. The OCEL domain occupies 440-551 (PDYVAKYPVI…RIQEYDKVMN (112 aa)).

This sequence belongs to the ELL/occludin family. As to quaternary structure, interacts with TJP1. Interacts with the ubiquitin ligase ITCH. Interacts (via C-terminal cytoplasmic domain) with LSR (via the cytoplasmic domain), ILDR1 and ILDR2; the interaction is required to recruit MARVELD2 to tricellular contacts. In terms of processing, ubiquitinated by ITCH; but this ubiquitination does not lead to proteasomal degradation. Polyubiquitinated at Lys-412 via 'Lys-63'-linked ubiquitin chains; deubiquitinated by USP53. Post-translationally, phosphorylated.

It is found in the cell membrane. Its subcellular location is the cell junction. The protein localises to the tight junction. Plays a role in the formation of tricellular tight junctions and of epithelial barriers. Required for normal hearing via its role in the separation of the endolymphatic and perilymphatic spaces of the organ of Corti in the inner ear, and for normal survival of hair cells in the organ of Corti. The sequence is that of MARVEL domain-containing protein 2 from Homo sapiens (Human).